The following is a 419-amino-acid chain: Acyl-coenzyme A thioesterase 1 (419 aa).

Residues Ser232, Asp324, and His358 each act as charge relay system in the active site. Phosphoserine is present on Ser416.

The protein belongs to the C/M/P thioester hydrolase family. In terms of assembly, monomer. In terms of tissue distribution, expressed in liver.

The protein localises to the cytoplasm. The protein resides in the cytosol. It carries out the reaction hexadecanoyl-CoA + H2O = hexadecanoate + CoA + H(+). The enzyme catalyses dodecanoyl-CoA + H2O = dodecanoate + CoA + H(+). It catalyses the reaction tetradecanoyl-CoA + H2O = tetradecanoate + CoA + H(+). The catalysed reaction is decanoyl-CoA + H2O = decanoate + CoA + H(+). It carries out the reaction octadecanoyl-CoA + H2O = octadecanoate + CoA + H(+). The enzyme catalyses eicosanoyl-CoA + H2O = eicosanoate + CoA + H(+). It catalyses the reaction (9Z)-octadecenoyl-CoA + H2O = (9Z)-octadecenoate + CoA + H(+). The catalysed reaction is (9Z)-hexadecenoyl-CoA + H2O = (9Z)-hexadecenoate + CoA + H(+). It carries out the reaction (9E)-octadecenoyl-CoA + H2O = (9E)-octadecenoate + CoA + H(+). Its pathway is lipid metabolism; fatty acid metabolism. In terms of biological role, catalyzes the hydrolysis of acyl-CoAs into free fatty acids and coenzyme A (CoASH), regulating their respective intracellular levels. More active towards saturated and unsaturated long chain fatty acyl-CoAs (C12-C20). In Rattus norvegicus (Rat), this protein is Acyl-coenzyme A thioesterase 1 (Acot1).